Reading from the N-terminus, the 65-residue chain is U15-hexatoxin-Mg1a (65 aa).

Post-translationally, contains 4 disulfide bonds. In terms of tissue distribution, expressed by the venom gland.

It localises to the secreted. Intrathorax injection into crickets causes paralysis prolonged for more than 60 minutes, followed by recovery. The polypeptide is U15-hexatoxin-Mg1a (Macrothele gigas (Japanese funnel web spider)).